We begin with the raw amino-acid sequence, 456 residues long: MRKIKEISADTMTPISVYLRLKGKNKVILESIPRENDQSRFSIIALNPVKHIKFTDGILSVNDEIISDENPMEFLEKLVCQPESTDENLDLPFTSGAIGYAGFDTYGIFEGIQPELKDSIGTPDMYFMLYESALIFDHKREKLIFIEDNTYSQRSEKELQNALSANIESLSLLTEAENELTELSKLNFVSNMSQELFEEKVAKAKELIRNGDMFQVVLSQRLTADFTDNPFNYYRKLRVENPSSYMYFMEFDNFHVIGSSPERLVAVHGNQVSTNPIAGTRKRGQTEFEDQALIEDLESDPKEVAEHKMLVDLGRNDIGKISKYGSIEVPVFMKVEKYRYVMHITSEVTGELRPEFTAMDALRATLPAGTLSGAPKHRAYQRIYEFETQKRGIYGGAIGYLTKNGNCDFAIAIRTMVLKDKKAHVQAGAGIVYDSVPEHEYQETLNKAQGLLKVGQ.

Residues serine 31 and 244-246 (SYM) contribute to the L-tryptophan site. 279–280 (GT) serves as a coordination point for chorismate. Residue glutamate 306 coordinates Mg(2+). Chorismate-binding positions include tyrosine 394, arginine 414, 428–430 (GAG), and glycine 430. Glutamate 443 provides a ligand contact to Mg(2+).

Belongs to the anthranilate synthase component I family. In terms of assembly, heterotetramer consisting of two non-identical subunits: a beta subunit (TrpG) and a large alpha subunit (TrpE). Mg(2+) serves as cofactor.

It catalyses the reaction chorismate + L-glutamine = anthranilate + pyruvate + L-glutamate + H(+). It functions in the pathway amino-acid biosynthesis; L-tryptophan biosynthesis; L-tryptophan from chorismate: step 1/5. Its activity is regulated as follows. Feedback inhibited by tryptophan. Its function is as follows. Part of a heterotetrameric complex that catalyzes the two-step biosynthesis of anthranilate, an intermediate in the biosynthesis of L-tryptophan. In the first step, the glutamine-binding beta subunit (TrpG) of anthranilate synthase (AS) provides the glutamine amidotransferase activity which generates ammonia as a substrate that, along with chorismate, is used in the second step, catalyzed by the large alpha subunit of AS (TrpE) to produce anthranilate. In the absence of TrpG, TrpE can synthesize anthranilate directly from chorismate and high concentrations of ammonia. This Lactococcus lactis subsp. lactis (strain IL1403) (Streptococcus lactis) protein is Anthranilate synthase component 1 (trpE).